Reading from the N-terminus, the 462-residue chain is Cysteine--tRNA ligase (462 aa).

Cys-30 contributes to the Zn(2+) binding site. Residues 32–42 (MTVYDYCHVGH) carry the 'HIGH' region motif. Residues Cys-214, His-239, and Glu-243 each contribute to the Zn(2+) site. Positions 271–275 (KMSKS) match the 'KMSKS' region motif. Lys-274 is an ATP binding site.

Belongs to the class-I aminoacyl-tRNA synthetase family. In terms of assembly, monomer. Zn(2+) serves as cofactor.

The protein localises to the cytoplasm. The catalysed reaction is tRNA(Cys) + L-cysteine + ATP = L-cysteinyl-tRNA(Cys) + AMP + diphosphate. The protein is Cysteine--tRNA ligase of Cupriavidus taiwanensis (strain DSM 17343 / BCRC 17206 / CCUG 44338 / CIP 107171 / LMG 19424 / R1) (Ralstonia taiwanensis (strain LMG 19424)).